The primary structure comprises 444 residues: Adenine permease AdeQ (444 aa).

At 1-29 (MNNDNTDYVSNESGTLSRLFKLPQHGTTV) the chain is on the cytoplasmic side. Residues 30 to 53 (RTELIAGMTTFLTMVYIVFVNPQI) traverse the membrane as a helical segment. Topologically, residues 54 to 63 (LGAAQMDPKV) are periplasmic. Residues 64-82 (VFVTTCLIAGIGSIAMGIF) traverse the membrane as a helical segment. Residues 83-84 (AN) lie on the Cytoplasmic side of the membrane. The discontinuously helical transmembrane segment at 85-101 (LPVALAPAMGLNAFFAF) threads the bilayer. Topologically, residues 102–113 (VVVGAMGISWQT) are periplasmic. Residues 114–133 (GMGAIFWGAVGLFLLTLFRI) traverse the membrane as a helical segment. The Cytoplasmic segment spans residues 134–145 (RYWMISNIPLSL). Residues 146–166 (RIGITSGIGLFIALMGLKNTG) traverse the membrane as a helical segment. Over 167–182 (VIVANKDTLVMIGDLS) the chain is Periplasmic. Residues 183–200 (SHGVLLGILGFFIITVLS) form a helical membrane-spanning segment. Over 201 to 204 (SRHF) the chain is Cytoplasmic. A helical transmembrane segment spans residues 205 to 223 (HAAVLVSIVVTSCCGLFFG). Residues 224–251 (DVHFSGVYSIPPDISGVIGEVDLSGALT) lie on the Periplasmic side of the membrane. The helical transmembrane segment at 252–280 (LELAGIIFSFMLINLFDSSGTLIGVTDKA) threads the bilayer. The Cytoplasmic portion of the chain corresponds to 281–293 (GLIDGNGKFPNMN). A helical membrane pass occupies residues 294–309 (KALYVDSVSSVAGAFI). At 310 to 311 (GT) the chain is on the periplasmic side. A discontinuously helical membrane pass occupies residues 312-327 (SSVTAYIESTSGVAVG). The Cytoplasmic portion of the chain corresponds to 328-331 (GRTG). The helical transmembrane segment at 332–346 (LTAVVVGVMFLLVMF) threads the bilayer. The Periplasmic segment spans residues 347–357 (FSPLVAIVPPY). A helical membrane pass occupies residues 358-377 (ATAGALIFVGVLMTSSLARV). Over 378-382 (NWDDF) the chain is Cytoplasmic. The discontinuously helical intramembrane region spans 383–418 (TESVPAFITTVMMPFTFSITEGIALGFMSYCIMKVC). Over 419-444 (TGRWRDLNLCVVVVAALFALKIILVD) the chain is Cytoplasmic.

This sequence belongs to the nucleobase:cation symporter-2 (NCS2) (TC 2.A.40) family. Azg-like subfamily.

The protein localises to the cell inner membrane. Functionally, high-affinity transporter for adenine. This chain is Adenine permease AdeQ (adeQ), found in Escherichia coli (strain K12).